The following is a 498-amino-acid chain: Lycopene beta cyclase, chloroplastic/chromoplastic (498 aa).

The N-terminal 79 residues, 1–79 (MDTLLRTPNN…ELPMYDPSKG (79 aa)), are a transit peptide targeting the chloroplast and chromoplast. 84-112 (LAVVGGGPAGLAVAQQVSEAGLSVCSIDP) lines the NAD(+) pocket. An FLEET motif motif is present at residues 293–297 (FLEET).

Belongs to the lycopene cyclase family. In terms of assembly, monomer. Requires FAD as cofactor. NADPH is required as a cofactor.

It is found in the plastid. It localises to the chloroplast. Its subcellular location is the chromoplast. It catalyses the reaction a carotenoid psi-end group = a carotenoid beta-end derivative. The catalysed reaction is all-trans-lycopene = gamma-carotene. It carries out the reaction gamma-carotene = all-trans-beta-carotene. The enzyme catalyses all-trans-neurosporene = beta-zeacarotene. It catalyses the reaction beta-zeacarotene = 7,8-dihydro-beta-carotene. The protein operates within carotenoid biosynthesis; beta-carotene biosynthesis. Its pathway is carotenoid biosynthesis; beta-zeacarotene biosynthesis. Functionally, catalyzes the double cyclization reaction which converts lycopene to beta-carotene. Catalyzes the double cyclization reaction which converts neurosporene to 7,8-dihydro-beta-carotene. This is Lycopene beta cyclase, chloroplastic/chromoplastic from Capsicum annuum (Capsicum pepper).